The primary structure comprises 105 residues: Large ribosomal subunit protein uL24 (105 aa).

Belongs to the universal ribosomal protein uL24 family. In terms of assembly, part of the 50S ribosomal subunit.

Functionally, one of two assembly initiator proteins, it binds directly to the 5'-end of the 23S rRNA, where it nucleates assembly of the 50S subunit. One of the proteins that surrounds the polypeptide exit tunnel on the outside of the subunit. This Methylocella silvestris (strain DSM 15510 / CIP 108128 / LMG 27833 / NCIMB 13906 / BL2) protein is Large ribosomal subunit protein uL24.